The primary structure comprises 237 residues: Probable aquaporin SIP2-1 (237 aa).

Transmembrane regions (helical) follow at residues 15–35 (FMWI…LGFS), 39–59 (PSGE…FAYL), 71–91 (LTAL…SVFV), 122–142 (VAIH…VLLS), 169–189 (ILGS…GWAY), and 202–222 (VYWL…KVVF). The NPA 1 motif lies at 69–71 (NPL). The NPA 2 signature appears at 180-182 (NPA).

Belongs to the MIP/aquaporin (TC 1.A.8) family. SIP (TC 1.A.8.10) subfamily. Expressed in dividing cells and elongating regions of the root tips, emerging lateral roots, root steles, cotyledons, main veins of the rosette leaves, vascular tissues of the flower petals, stigma, stamens (anthers and filaments), pollen and the top and bottom (receptacle) of siliques.

It is found in the endoplasmic reticulum membrane. Functionally, water channel required to facilitate the transport of water across cell membrane. Inactive in yeast cells. In Arabidopsis thaliana (Mouse-ear cress), this protein is Probable aquaporin SIP2-1 (SIP2-1).